Reading from the N-terminus, the 480-residue chain is Glycogen synthase 1 (480 aa).

Lys-15 serves as a coordination point for ADP-alpha-D-glucose.

The protein belongs to the glycosyltransferase 1 family. Bacterial/plant glycogen synthase subfamily.

The enzyme catalyses [(1-&gt;4)-alpha-D-glucosyl](n) + ADP-alpha-D-glucose = [(1-&gt;4)-alpha-D-glucosyl](n+1) + ADP + H(+). The protein operates within glycan biosynthesis; glycogen biosynthesis. Synthesizes alpha-1,4-glucan chains using ADP-glucose. In Rhizobium meliloti (strain 1021) (Ensifer meliloti), this protein is Glycogen synthase 1 (glgA1).